Here is a 199-residue protein sequence, read N- to C-terminus: Putative lectin L633 (199 aa).

The signal sequence occupies residues 1-25 (MNILLLLMLLTSIILLVILIFLAYN). Residues 35-48 (CITPAPESQSISPD) are compositionally biased toward polar residues. Residues 35–74 (CITPAPESQSISPDQTTQLQTTTPVTSTPSNPTPTTIIPN) form a disordered region. Over residues 49–73 (QTTQLQTTTPVTSTPSNPTPTTIIP) the composition is skewed to low complexity. Positions 84–195 (EIVSNGDNVL…LGQELWCATR (112 aa)) constitute a Bulb-type lectin domain. An N-linked (GlcNAc...) asparagine; by host glycan is attached at N121.

It is found in the secreted. The sequence is that of Putative lectin L633 from Acanthamoeba polyphaga (Amoeba).